A 227-amino-acid polypeptide reads, in one-letter code: PKHD-type hydroxylase BTH_II1201 (227 aa).

The Fe2OG dioxygenase domain maps to 78–178 (KVFPPLFNRY…RVASFFWIQS (101 aa)). The Fe cation site is built by histidine 96, aspartate 98, and histidine 159. Residue arginine 169 participates in 2-oxoglutarate binding.

Fe(2+) serves as cofactor. The cofactor is L-ascorbate.

This Burkholderia thailandensis (strain ATCC 700388 / DSM 13276 / CCUG 48851 / CIP 106301 / E264) protein is PKHD-type hydroxylase BTH_II1201.